A 254-amino-acid polypeptide reads, in one-letter code: Alcohol dehydrogenase (254 aa).

M1 carries the N-acetylmethionine modification. 10 to 33 (FVAALGGIGLDTSRELVKRNLKNF) lines the NAD(+) pocket. S138 serves as a coordination point for substrate. Y151 functions as the Proton acceptor in the catalytic mechanism.

Belongs to the short-chain dehydrogenases/reductases (SDR) family. In terms of assembly, homodimer.

The enzyme catalyses a primary alcohol + NAD(+) = an aldehyde + NADH + H(+). It carries out the reaction a secondary alcohol + NAD(+) = a ketone + NADH + H(+). The chain is Alcohol dehydrogenase (Adh) from Drosophila lebanonensis (Fruit fly).